Reading from the N-terminus, the 62-residue chain is Alpha-elapitoxin-Pc1 (62 aa).

4 disulfides stabilise this stretch: C3/C24, C17/C41, C43/C54, and C55/C60.

The protein belongs to the three-finger toxin family. Short-chain subfamily. Type I alpha-neurotoxin sub-subfamily. Expressed by the venom gland.

The protein resides in the secreted. In terms of biological role, bird-specific neurotoxin (tested on chicken) that acts as pseudo-irreversible antagonists at the nicotinic acetylcholine receptor (nAChR) of the skeletal neuromuscular junction. Has no significant effect on the electrically-induced twitches of the rat isolated phrenic nerve-diaphragm preparation. The protein is Alpha-elapitoxin-Pc1 of Pseudechis colletti (Collett's snake).